The primary structure comprises 506 residues: Chromodomain Y-like protein 2 (506 aa).

In terms of domain architecture, Chromo spans 7–67; the sequence is YEVERIVDKR…LHMSKDKRIK (61 aa). The tract at residues 64–177 is disordered; that stretch reads KRIKSGKQSS…RHFGNGSHQP (114 aa). Basic and acidic residues predominate over residues 88–98; the sequence is KLSHRPSDPGK. Residues 101-120 are compositionally biased toward basic residues; that stretch reads GTSHKRKRINPPLAKPKKGY. The segment covering 133 to 143 has biased composition (polar residues); the sequence is KTVSYRTTPSG.

As to quaternary structure, interacts (via chromo domain) with histone H3K9me3. In terms of tissue distribution, ubiquitously expressed.

The protein resides in the nucleus. This Homo sapiens (Human) protein is Chromodomain Y-like protein 2 (CDYL2).